The primary structure comprises 989 residues: Protease PrtH (989 aa).

Repeats lie at residues 270-323 (TPTD…KCVN) and 528-581 (SPAS…VCVD). The segment at 969 to 989 (PRDTPWRYGKRELPPSASGMR) is disordered.

It belongs to the peptidase C25 family.

It is found in the cytoplasmic vesicle. Its function is as follows. Cleaves human complement component C3. May enable P.gingivalis to evade complement-mediated killing during the immune response. Plays an important role in soft tissue infections and is a virulence factor. This Porphyromonas gingivalis (strain ATCC BAA-308 / W83) protein is Protease PrtH (prtH).